Reading from the N-terminus, the 89-residue chain is Small ribosomal subunit protein bS20 (89 aa).

The protein belongs to the bacterial ribosomal protein bS20 family.

Its function is as follows. Binds directly to 16S ribosomal RNA. In Stenotrophomonas maltophilia (strain R551-3), this protein is Small ribosomal subunit protein bS20.